The primary structure comprises 63 residues: MSRVCDICGKKPTTGNNVSHAHNKTRKVWYPNLQKVRALHKGKVQAIKVCTRCLRSGAVTKAI.

Belongs to the bacterial ribosomal protein bL28 family.

The chain is Large ribosomal subunit protein bL28 from Syntrophotalea carbinolica (strain DSM 2380 / NBRC 103641 / GraBd1) (Pelobacter carbinolicus).